The chain runs to 283 residues: Orotidine 5'-phosphate decarboxylase (283 aa).

Lys-97 serves as the catalytic Proton donor.

It belongs to the OMP decarboxylase family. Type 2 subfamily.

It catalyses the reaction orotidine 5'-phosphate + H(+) = UMP + CO2. The protein operates within pyrimidine metabolism; UMP biosynthesis via de novo pathway; UMP from orotate: step 2/2. The protein is Orotidine 5'-phosphate decarboxylase of Clostridium botulinum (strain Loch Maree / Type A3).